The chain runs to 502 residues: Cytochrome P450 71B17 (502 aa).

Residues methionine 1 to cysteine 21 traverse the membrane as a helical segment. Cysteine 444 contributes to the heme binding site.

It belongs to the cytochrome P450 family. Heme is required as a cofactor.

It is found in the membrane. In Arabidopsis thaliana (Mouse-ear cress), this protein is Cytochrome P450 71B17 (CYP71B17).